The primary structure comprises 389 residues: Chalcone synthase 1 (389 aa).

The active site involves C164.

This sequence belongs to the thiolase-like superfamily. Chalcone/stilbene synthases family.

The catalysed reaction is (E)-4-coumaroyl-CoA + 3 malonyl-CoA + 3 H(+) = 2',4,4',6'-tetrahydroxychalcone + 3 CO2 + 4 CoA. It functions in the pathway secondary metabolite biosynthesis; flavonoid biosynthesis. Functionally, the primary product of this enzyme is 4,2',4',6'-tetrahydroxychalcone (also termed naringenin-chalcone or chalcone) which can under specific conditions spontaneously isomerize into naringenin. The polypeptide is Chalcone synthase 1 (CHS1) (Trifolium subterraneum (Subterranean clover)).